The following is a 320-amino-acid chain: Endochitinase (320 aa).

A signal peptide spans 1–23 (MKRTLKVSFFILCLLPLFLGSKA). The region spanning 24 to 64 (EQCGSQAGGAVCPNGLCCSKFGFCGSTDPYCGDGCQSQCKS) is the Chitin-binding type-1 domain. 7 cysteine pairs are disulfide-bonded: Cys-26–Cys-41, Cys-35–Cys-47, Cys-40–Cys-54, Cys-58–Cys-62, Cys-101–Cys-163, Cys-175–Cys-182, and Cys-281–Cys-313. Glu-145 serves as the catalytic Proton donor.

The protein belongs to the glycosyl hydrolase 19 family. Chitinase class I subfamily.

The enzyme catalyses Random endo-hydrolysis of N-acetyl-beta-D-glucosaminide (1-&gt;4)-beta-linkages in chitin and chitodextrins.. In terms of biological role, defense against chitin-containing fungal pathogens. The chain is Endochitinase from Pisum sativum (Garden pea).